Here is a 75-residue protein sequence, read N- to C-terminus: Meucin-49 (75 aa).

A signal peptide spans 1 to 22 (MNKKILLVIFIVTMLIVDEVNS).

This sequence belongs to the non-disulfide-bridged peptide (NDBP) superfamily. Long chain multifunctional peptide (group 2) family. Expressed by the venom gland.

It is found in the secreted. In terms of biological role, insecticidal toxin and antimicrobial peptide with potent activity against both Gram-negative and -positive bacteria, as well as against fungi. Acts by disrupting bacterial membrane integrity. Shows broad-spectrum and highly potent bactericidal activities against the Gram-positive bacteria B.cereus, B.megaterium, B.subtilis, M.luteus, S.aureus, S.epidermidis, S.warneri, S.griseus, S.scabiei, S.mutans, S.salivarius, and S.sanguinis. Also exhibits a wide spectrum of activity against the Gram-negative bacteria A.faecalis, E.coli, P.aeruginosa, P.solanacearum, S.enterica, S.marcescens, and S.maltophilia. Also shows antimicrobial activities against the fungal strains Aspergillus flavus, A.fumigatus, A.nidulans, A.niger, Beauveria bassiana, and Saccharomyces cerevisiae. Its antibiotic activity is potentiated by other antibacterial peptides such as MeuNaTxbeta-4. Also induces cytolysis on mice, lizards and birds erythrocytes. The chain is Meucin-49 from Mesobuthus eupeus (Lesser Asian scorpion).